The following is a 946-amino-acid chain: Inhibin beta chain (946 aa).

2 disordered regions span residues V115–S142 and K174–R194. The span at V128–S142 shows a compositional bias: low complexity. Residues N208, N217, N271, and N389 are each glycosylated (N-linked (GlcNAc...) asparagine). The segment at S436–Y462 is disordered. Basic and acidic residues predominate over residues G447–H459. N-linked (GlcNAc...) asparagine glycans are attached at residues N471, N484, N542, N561, N566, N732, and N804. 4 disulfide bridges follow: C837/C846, C845/C912, C874/C943, and C878/C945.

It belongs to the TGF-beta family. As to quaternary structure, homodimer or heterodimer; disulfide-linked. Cleaved in vitro by metalloproteases tok and tld to produce a 30 kDa product. In terms of tissue distribution, widely expressed in larval brains.

The protein localises to the secreted. Controls several aspects of neuronal morphogenesis; essential for optic lobe development, EcR-B1 expression in larval brains, mushroom body remodeling, dorsal neuron morphogenesis and motoneuron axon guidance. Ligands Actbeta and daw act redundantly through the Activin receptor Babo and its transcriptional mediator Smad2 (Smox), to regulate neuroblast numbers and proliferation rates in the developing larval brain. The chain is Inhibin beta chain (Actbeta) from Drosophila melanogaster (Fruit fly).